Consider the following 133-residue polypeptide: Small ribosomal subunit protein uS8 (133 aa).

It belongs to the universal ribosomal protein uS8 family. As to quaternary structure, part of the 30S ribosomal subunit. Contacts proteins S5 and S12.

Functionally, one of the primary rRNA binding proteins, it binds directly to 16S rRNA central domain where it helps coordinate assembly of the platform of the 30S subunit. This Micrococcus luteus (Micrococcus lysodeikticus) protein is Small ribosomal subunit protein uS8.